The chain runs to 370 residues: Putative replication factor C small subunit L478 (370 aa).

Glycine 41–lysine 48 contacts ATP. Residues arginine 342 to lysine 353 are compositionally biased toward basic and acidic residues. Residues arginine 342–asparagine 370 are disordered. The segment covering serine 354 to asparagine 370 has biased composition (basic residues).

This sequence belongs to the activator 1 small subunits family. RfcS subfamily.

In terms of biological role, part of the RFC clamp loader complex which loads the PCNA sliding clamp onto DNA. In Acanthamoeba polyphaga (Amoeba), this protein is Putative replication factor C small subunit L478.